Here is a 209-residue protein sequence, read N- to C-terminus: Flavin prenyltransferase UbiX (209 aa).

Residues 13 to 15 (GAS), Ser-39, 104 to 107 (STGT), Cys-116, and Arg-139 contribute to the FMN site. Dimethylallyl phosphate-binding residues include Tyr-169 and Arg-185.

The protein belongs to the UbiX/PAD1 family.

It carries out the reaction dimethylallyl phosphate + FMNH2 = prenylated FMNH2 + phosphate. Functionally, flavin prenyltransferase that catalyzes the synthesis of the prenylated FMN cofactor (prenyl-FMN) for 4-hydroxy-3-polyprenylbenzoic acid decarboxylase UbiD. The prenyltransferase is metal-independent and links a dimethylallyl moiety from dimethylallyl monophosphate (DMAP) to the flavin N5 and C6 atoms of FMN. The polypeptide is Flavin prenyltransferase UbiX (Pseudomonas aeruginosa (strain ATCC 15692 / DSM 22644 / CIP 104116 / JCM 14847 / LMG 12228 / 1C / PRS 101 / PAO1)).